We begin with the raw amino-acid sequence, 634 residues long: Chaperone protein HtpG (634 aa).

The a; substrate-binding stretch occupies residues 1 to 339 (MAQETMSFQA…SADLPLNVSR (339 aa)). Residues 340 to 559 (EILQESRDVK…DGEMSGYLQR (220 aa)) form a b region. The segment at 560 to 634 (MLKAAGQQAP…ALLLARANEA (75 aa)) is c.

This sequence belongs to the heat shock protein 90 family. In terms of assembly, homodimer.

The protein resides in the cytoplasm. In terms of biological role, molecular chaperone. Has ATPase activity. This Paraburkholderia xenovorans (strain LB400) protein is Chaperone protein HtpG.